Consider the following 849-residue polypeptide: MQRVSFEVKDTEAEKSSSEILSGSLPSTYRNPAMENVGNAVDDGSSVKNNPKLDMQKQNGLVKWFKKCLTMVSGESKAPRLDRSKSTAGQALKGLKIISKTDGNAAWTVVEKRYLKITANTDGLLLRSKFGECIGMNSKEFALELFDALARKSHLKGDVITETELKKFWEQINDKSFDSRLITFFDLMDKDSDGRLTEDEVREIIKLSSSANHLSCIQNKADEYAAMIMEELDPDHMGYIMMESLKKLLLQAETKSVSTDINSEERKELSDMLTESLKPTRDPNHLRRWYCQLRFFVLDSWQRVWVIALWLTIMAILFAYKYIQYKNRAVYEVLGPCVCLAKGAAETLKLNMALILLPVCRNTITWLRNKTRLGVFVPFDDNLNFHKVIAVGIAIGVAIHSVSHLACDFPLLIAATPAEYMPLGKFFGEEQPKRYLHFVKSTEGITGLVMVFLMVIAFTLAMPWFRRGKLEKKLPGPLKKLASFNAFWYTHHLFVIVYILLVLHGYYIYLNKEWYKKTTWMYLAVPVALYAYERLIRAFRSSIRTVKVLKMAAYPGKVLTLQMSKPTNFKYMSGQYMFVNCPAVSPFEWHPFSITSTPQDDYLSVHIKALGDWTEAIQGVFSEVSKPPPVGDMLNGANSPRFPKIMIDGPYGAPAQDYKKYEVVLLIGLGIGATPMISIIKDIINNTETKEQLSQMEKGSPQEQQGNKETFKTRRAYFYWVTKEQGTFDWFKNIMNEIAERDKSKVIELHNHCTSVYEEGDVRSALIRMLQSLNYAKNGLDIVAGTRVMSHFARPNWKNVYKQIAMDHPGANVGVFYCGAPVLTKELRQLALEFTHKTSTRFSFHKENF.

Positions 1–17 (MQRVSFEVKDTEAEKSS) are enriched in basic and acidic residues. The disordered stretch occupies residues 1-53 (MQRVSFEVKDTEAEKSSSEILSGSLPSTYRNPAMENVGNAVDDGSSVKNNPKL). At 1–303 (MQRVSFEVKD…RFFVLDSWQR (303 aa)) the chain is on the cytoplasmic side. Over residues 18-27 (SEILSGSLPS) the composition is skewed to low complexity. 2 EF-hand-like regions span residues 118–128 (TANTDGLLLRS) and 153–164 (SHLKGDVITETE). EF-hand domains follow at residues 176-211 (SFDS…SSSA) and 220-255 (KADE…AETK). Residues Asp189, Asp191, Asp193, Arg195, and Glu200 each coordinate Ca(2+). Residue Ser270 is modified to Phosphoserine. A helical membrane pass occupies residues 304–324 (VWVIALWLTIMAILFAYKYIQ). Residues 325–392 (YKNRAVYEVL…LNFHKVIAVG (68 aa)) lie on the Extracellular side of the membrane. One can recognise a Ferric oxidoreductase domain in the interval 342-502 (KGAAETLKLN…LFVIVYILLV (161 aa)). A helical membrane pass occupies residues 393–409 (IAIGVAIHSVSHLACDF). At 410–444 (PLLIAATPAEYMPLGKFFGEEQPKRYLHFVKSTEG) the chain is on the cytoplasmic side. Residues 445–465 (ITGLVMVFLMVIAFTLAMPWF) traverse the membrane as a helical segment. At 466 to 489 (RRGKLEKKLPGPLKKLASFNAFWY) the chain is on the extracellular side. Residues 490-510 (THHLFVIVYILLVLHGYYIYL) form a helical membrane-spanning segment. Residues 511–518 (NKEWYKKT) lie on the Cytoplasmic side of the membrane. Residues 519–536 (TWMYLAVPVALYAYERLI) form a helical membrane-spanning segment. Residues 537 to 659 (RAFRSSIRTV…PYGAPAQDYK (123 aa)) lie on the Extracellular side of the membrane. An FAD-binding FR-type domain is found at 541-657 (SSIRTVKVLK…DGPYGAPAQD (117 aa)). The helical transmembrane segment at 660 to 680 (KYEVVLLIGLGIGATPMISII) threads the bilayer. Topologically, residues 681–849 (KDIINNTETK…TRFSFHKENF (169 aa)) are cytoplasmic.

It belongs to the RBOH (TC 5.B.1.3) family. Monomer and homodimer.

The protein resides in the membrane. In terms of biological role, calcium-dependent NADPH oxidase that generates superoxide. This Arabidopsis thaliana (Mouse-ear cress) protein is Putative respiratory burst oxidase homolog protein G (RBOHG).